We begin with the raw amino-acid sequence, 485 residues long: ATP-dependent rRNA helicase RRP3 (485 aa).

Positions 1–10 (MPVLKKRKLA) are enriched in basic residues. The disordered stretch occupies residues 1-55 (MPVLKKRKLAHTAQPDPIVSDLESSSSEASQQSHDEQLTAANEQDDESPQVQREE). Residues 20-32 (SDLESSSSEASQQ) show a composition bias toward low complexity. The Q motif motif lies at 59 to 87 (KSFKDLGIIDSLCEACEALGYKSPTPIQA). Positions 90 to 261 (IPLALQGRDL…RASLSNPLRV (172 aa)) constitute a Helicase ATP-binding domain. 103 to 110 (AETGSGKT) is an ATP binding site. The short motif at 209-212 (DEAD) is the DEAD box element. The 149-residue stretch at 285-433 (YKDIYLVYLL…EYKVEKEEVM (149 aa)) folds into the Helicase C-terminal domain. Residues 449–458 (EMKDLHEKRG) show a composition bias toward basic and acidic residues. The segment at 449 to 485 (EMKDLHEKRGSRGATLKGRRPAKGAKRGRDEMDREEG) is disordered. The span at 465 to 474 (KGRRPAKGAK) shows a compositional bias: basic residues. A compositionally biased stretch (basic and acidic residues) spans 475–485 (RGRDEMDREEG).

This sequence belongs to the DEAD box helicase family. DDX47/RRP3 subfamily. In terms of assembly, interacts with the SSU processome.

Its subcellular location is the nucleus. It catalyses the reaction ATP + H2O = ADP + phosphate + H(+). ATP-dependent rRNA helicase required for pre-ribosomal RNA processing. Involved in the maturation of the 35S-pre-rRNA and to its cleavage to mature 18S rRNA. The polypeptide is ATP-dependent rRNA helicase RRP3 (Ajellomyces capsulatus (strain NAm1 / WU24) (Darling's disease fungus)).